The chain runs to 380 residues: L-lactate dehydrogenase (380 aa).

An FMN hydroxy acid dehydrogenase domain is found at 1-380 (MIISSTTDFR…DRSILAKTDR (380 aa)). Tyr24 contacts substrate. 2 residues coordinate FMN: Ser106 and Gln127. Tyr129 provides a ligand contact to substrate. Residue Thr155 participates in FMN binding. Arg164 lines the substrate pocket. Residue Lys251 participates in FMN binding. His275 (proton acceptor) is an active-site residue. Residue Arg278 coordinates substrate. Position 306–330 (306–330 (DGGVRSGLDVVRMLALGAKGVLLGR)) interacts with FMN.

Belongs to the FMN-dependent alpha-hydroxy acid dehydrogenase family. It depends on FMN as a cofactor.

The protein resides in the cell inner membrane. It catalyses the reaction (S)-lactate + A = pyruvate + AH2. Catalyzes the conversion of L-lactate to pyruvate. Is coupled to the respiratory chain. The polypeptide is L-lactate dehydrogenase (Caulobacter sp. (strain K31)).